Reading from the N-terminus, the 122-residue chain is Large ribosomal subunit protein bL17 (122 aa).

This sequence belongs to the bacterial ribosomal protein bL17 family. Part of the 50S ribosomal subunit. Contacts protein L32.

In Nautilia profundicola (strain ATCC BAA-1463 / DSM 18972 / AmH), this protein is Large ribosomal subunit protein bL17.